The primary structure comprises 96 residues: MTELHQIVKRMLVTEKSTLEKDEKNKYYFEVDRRANKIEIRKAVERLLKVTVDDVHVINIKGKKKRTGRIIGKRRDWKKAVVTLAQGNTIDIYHGV.

It belongs to the universal ribosomal protein uL23 family. Part of the 50S ribosomal subunit. Contacts protein L29, and trigger factor when it is bound to the ribosome.

Functionally, one of the early assembly proteins it binds 23S rRNA. One of the proteins that surrounds the polypeptide exit tunnel on the outside of the ribosome. Forms the main docking site for trigger factor binding to the ribosome. The protein is Large ribosomal subunit protein uL23 of Syntrophus aciditrophicus (strain SB).